The sequence spans 396 residues: NADH-quinone oxidoreductase subunit D (396 aa).

This sequence belongs to the complex I 49 kDa subunit family. NDH-1 is composed of 14 different subunits. Subunits NuoB, C, D, E, F, and G constitute the peripheral sector of the complex.

It localises to the cell inner membrane. It carries out the reaction a quinone + NADH + 5 H(+)(in) = a quinol + NAD(+) + 4 H(+)(out). NDH-1 shuttles electrons from NADH, via FMN and iron-sulfur (Fe-S) centers, to quinones in the respiratory chain. The immediate electron acceptor for the enzyme in this species is believed to be ubiquinone. Couples the redox reaction to proton translocation (for every two electrons transferred, four hydrogen ions are translocated across the cytoplasmic membrane), and thus conserves the redox energy in a proton gradient. This is NADH-quinone oxidoreductase subunit D from Rhodopseudomonas palustris (strain BisB18).